The primary structure comprises 859 residues: Alanine--tRNA ligase (859 aa).

Zn(2+) is bound by residues histidine 562, histidine 566, cysteine 664, and histidine 668.

Belongs to the class-II aminoacyl-tRNA synthetase family. Zn(2+) is required as a cofactor.

The protein localises to the cytoplasm. The catalysed reaction is tRNA(Ala) + L-alanine + ATP = L-alanyl-tRNA(Ala) + AMP + diphosphate. In terms of biological role, catalyzes the attachment of alanine to tRNA(Ala) in a two-step reaction: alanine is first activated by ATP to form Ala-AMP and then transferred to the acceptor end of tRNA(Ala). Also edits incorrectly charged Ser-tRNA(Ala) and Gly-tRNA(Ala) via its editing domain. This Aliivibrio fischeri (strain ATCC 700601 / ES114) (Vibrio fischeri) protein is Alanine--tRNA ligase.